Consider the following 1385-residue polypeptide: MKPVKHLLTTSNKSANVPALTTKKGLHNLPLSPELKEKHNAKLIHDKIEPMVLRSPPTGESILRYALPIPSSKTKNLLPEDEMIGKIIKHLKMVVSTLEETYGHCDQNGEEPFVKHEHEELSLSVGDDMNSFLTYCSQFAAQLEEALKEEQNILESLFKWFQWQVNQMEEISKDQTLLQAEPPKPDKTVILNIAEIVRLVQRFEELKNRLKQRSKSSVKVMLSKTMDKENRPEAVKSCEALAQKIEEFLEAHSTDEFKDVSATEPQTAHSMTNRFNAMLKVFENQANMLERAVNDQVLLDAEYKQMQCDFQLLSEEKLVLENELQKLKDKEKTKPTNNRTKKAVKTVKKKDKGKSEDSEKKMSPEKEFKIKEDLDQVQKVARLEIENKVLQEQLKQALQEAEKAKHQLNYFLNQEKLLKSEGKTETTMQVGNSQTKVKGEDSKNIPLEKETRKSLVSDSGGQRTSDKIQEYPQITAQSGRLIEKSSEKKRSSPAISDLSQILKSQDESAFLESSNEVSVAENQSYKSPSETHDKSLTTVSSSKEVQDSLSVGTLAQKNETVISPFILPPVLTESKKADVSEEQLQKMTEEQTYQAAEKSQADSEVPDENLMVENKDSVTKVQIEQMKQRTSSMERHEETLTTPQLPEDMVLVSRIQSETKNLKATRNESFHSHNDVPEENLMLEQDTKSKTEVEVKKQKSFQDNQLSTHNEVPNERLVVEHQESLSKTKLQIKKQETSTEQPLTTPDKEPNENLILRHQDSMSKSEMQVKEQRTLKGQRIITHDEEPGKNLVLEHQDSVSKLEMQIEKTKKLPREKRHSTHDEESGENPMLKHQDSVSKIQVQLEIQETSEGEGRSIPDKNSMFVHQDSVSKLQMQEKKKITPGRERRNTRIVVPNENVISVHQDSKSKLQMQEKKQINSGVERHKTFPLEIKKKDISLEHLLPEEKVLLSRSESQTKKLQAKVTSRKIKNEAASELPDTAENLPAMYPSISDLIIQFDLNKVVETDIESLRGALGRRLLNDEFKTQSKSFPGPDIEQLTDAFGRDILKDEFKTRSKSLPETDERLHSTTERGTINDAIKTQLKRKSYPETVLKHLKGVNGKDIIKHLINIQSKSHGETDKEHLADDTGRGIIKGSINAQLKGHQKTDKNFFAYATGRGLMKESTTTQLKSHPETDKEFLADAIGRGIIIGPITTQLKSHRETDKELLKDAIGRDIIKGPISAQLKSHQETDVEPLTNAIGSSKTIGEIKTQLRTHYDVNLFKNKDMSVQRQEGIFTRSITPSKFPTKVINLSPFENKEETYEYSSPYVTAPSKAIYRTYRAGPSFSKDIHLPLLNQLPSGHSKVVTLSQKTIEFTLPTVTNTVGKPTYKVLHAAARKSVPHPYF.

Positions 299 to 330 (LDAEYKQMQCDFQLLSEEKLVLENELQKLKDK) form a coiled coil. A disordered region spans residues 329 to 364 (DKEKTKPTNNRTKKAVKTVKKKDKGKSEDSEKKMSP). Residues 339–352 (RTKKAVKTVKKKDK) show a composition bias toward basic residues. A compositionally biased stretch (basic and acidic residues) spans 353 to 364 (GKSEDSEKKMSP). Residues 374–411 (LDQVQKVARLEIENKVLQEQLKQALQEAEKAKHQLNYF) adopt a coiled-coil conformation. Disordered stretches follow at residues 422-545 (GKTE…SKEV), 572-752 (TESK…EPNE), and 809-834 (TKKLPREKRHSTHDEESGENPMLKHQ). Over residues 425-436 (ETTMQVGNSQTK) the composition is skewed to polar residues. Composition is skewed to basic and acidic residues over residues 437 to 455 (VKGEDSKNIPLEKETRKSL) and 481 to 490 (LIEKSSEKKR). Polar residues-rich tracts occupy residues 493-503 (PAISDLSQILK), 511-528 (LESSNEVSVAENQSYKSP), and 536-545 (LTTVSSSKEV). Residues 573-589 (ESKKADVSEEQLQKMTE) show a composition bias toward basic and acidic residues. The span at 654–664 (RIQSETKNLKA) shows a compositional bias: polar residues. 2 stretches are compositionally biased toward basic and acidic residues: residues 665-676 (TRNESFHSHNDV) and 685-697 (QDTKSKTEVEVKK). The segment covering 701 to 711 (FQDNQLSTHNE) has biased composition (polar residues). A compositionally biased stretch (basic and acidic residues) spans 712–726 (VPNERLVVEHQESLS).

Expressed in epithelium of normal cervix and cervical cancer. Overexpressed in early and interim cervical cancer.

Functionally, may play a role in tumorigenesis. The protein is Coiled-coil domain-containing protein 7 (CCDC7) of Homo sapiens (Human).